The sequence spans 288 residues: 33 kDa chaperonin (288 aa).

2 cysteine pairs are disulfide-bonded: Cys235–Cys237 and Cys268–Cys271.

It belongs to the HSP33 family. Under oxidizing conditions two disulfide bonds are formed involving the reactive cysteines. Under reducing conditions zinc is bound to the reactive cysteines and the protein is inactive.

The protein resides in the cytoplasm. Redox regulated molecular chaperone. Protects both thermally unfolding and oxidatively damaged proteins from irreversible aggregation. Plays an important role in the bacterial defense system toward oxidative stress. In Streptococcus thermophilus (strain ATCC BAA-491 / LMD-9), this protein is 33 kDa chaperonin.